Here is a 70-residue protein sequence, read N- to C-terminus: Protein SlyX homolog (70 aa).

The protein belongs to the SlyX family.

The polypeptide is Protein SlyX homolog (Shewanella woodyi (strain ATCC 51908 / MS32)).